Reading from the N-terminus, the 473-residue chain is MWTGLGPAVTLALVLVVAWATELKPTAPPIFTGRPFVVAWDVPTQDCGPRHKMPLDPKDMKAFDVQASPNEGFVNQNITIFYRDRLGMYPHFNSVGRSVHGGVPQNGSLWVHLEMLKGHVEHYIRTQEPAGLAVIDWEDWRPVWVRNWQDKDVYRRLSRHLVAIRHPDWPPERVAKEAQYEFEFAARQFMLETLRFVKAFRPRHLWGFYLFPDCYNHDYVQNWETYTGRCPDVEVSRNDQLAWLWAESTALFPSVYLEETLASSTHGRNFVSFRVQEALRVADVHHANHALPVYVFTRPTYSRGLTGLSEMDLISTIGESAALGAAGVILWGDAGFTTSNETCRRLKDYLTRSLVPYVVNVSWAAQYCSWAQCHGHGRCVRRDPNAHTFLHLSASSFRLVPSHAPDEPRLRPEGELSWADRNHLQMHFRCQCYLGWGGEQCQWDRRRAAGGASGAWAGSHLTGLLAVAVLAFT.

An N-terminal signal peptide occupies residues 1–20 (MWTGLGPAVTLALVLVVAWA). Intrachain disulfides connect Cys47–Cys343 and Cys214–Cys230. N-linked (GlcNAc...) asparagine glycans are attached at residues Asn77 and Asn106. The active-site Proton donor is Glu138. N-linked (GlcNAc...) asparagine glycosylation is found at Asn340 and Asn360. Positions 364–442 (AAQYCSWAQC…YLGWGGEQCQ (79 aa)) constitute an EGF-like domain. 3 cysteine pairs are disulfide-bonded: Cys368-Cys379, Cys373-Cys430, and Cys432-Cys441. Gly451 is lipidated: GPI-anchor amidated glycine. Residues 452–473 (ASGAWAGSHLTGLLAVAVLAFT) constitute a propeptide, removed in mature form.

The protein belongs to the glycosyl hydrolase 56 family. In terms of assembly, interacts with MST1R.

The protein localises to the cell membrane. The catalysed reaction is Random hydrolysis of (1-&gt;4)-linkages between N-acetyl-beta-D-glucosamine and D-glucuronate residues in hyaluronate.. Its function is as follows. Catalyzes hyaluronan degradation into small fragments that are endocytosed and degraded in lysosomes by HYAL1 and exoglycosidases. Essential for the breakdown of extracellular matrix hyaluronan. The protein is Hyaluronidase-2 (HYAL2) of Bos taurus (Bovine).